The chain runs to 507 residues: Sensor protein CseC (507 aa).

Positions 1 to 42 (MRGFFRQRRSVSPPGHPYDRTGPGEHAGPGARTGPGGRPRVL) are disordered. The span at 25 to 37 (EHAGPGARTGPGG) shows a compositional bias: gly residues. 2 consecutive transmembrane segments (helical) span residues 60-80 (LSAA…LVVH) and 183-203 (ALVI…VLIG). The 57-residue stretch at 204 to 260 (GQLSRRLREAAAAANRVASGEPDVRVRDAIGGVVRDETDDVARAVDAMADALQQRIE) folds into the HAMP domain. The 203-residue stretch at 268-470 (DIAHELRTPV…VAVLWLPEHA (203 aa)) folds into the Histidine kinase domain. A Phosphohistidine; by autocatalysis modification is found at histidine 271. A disordered region spans residues 472–507 (TNTGSYPMLPDRSKSGASSSARDMSREASQGMSRKP). A compositionally biased stretch (polar residues) spans 486–507 (SGASSSARDMSREASQGMSRKP).

Its subcellular location is the cell membrane. It carries out the reaction ATP + protein L-histidine = ADP + protein N-phospho-L-histidine.. Member of the two-component regulatory system CseB/CseC involved in the stability of the cell envelope, through activation of transcription of RNA polymerase sigma-E factor. CseC functions as a membrane-associated protein kinase that phosphorylates CseB in response to changes in the cell envelope. This is Sensor protein CseC (cseC) from Streptomyces coelicolor (strain ATCC BAA-471 / A3(2) / M145).